Reading from the N-terminus, the 256-residue chain is Osteocalcin 2 (256 aa).

The signal sequence occupies residues 1 to 18 (MKTLVLLSICALLSVCWS). Residues 19-209 (MGAVEPEVVV…LASVLLRRRR (191 aa)) constitute a propeptide that is removed on maturation. Low complexity predominate over residues 38–186 (AAPADPAAAA…SSSSSSSSES (149 aa)). The tract at residues 38-193 (AAPADPAAAA…SESASDEAAK (156 aa)) is disordered. The Gla domain maps to 218–252 (PLQLESLREVCELNIACDEMAETAGIVAAYVAYYG). 4 residues coordinate Ca(2+): E222, E226, E229, and D235. A 4-carboxyglutamate mark is found at E222, E226, and E229. A disulfide bridge links C228 with C234. E236 carries the post-translational modification 4-carboxyglutamate.

The protein belongs to the osteocalcin/matrix Gla protein family. Post-translationally, gamma-carboxyglutamate residues are formed by vitamin K dependent carboxylation by GGCX. These residues are essential for the binding of calcium.

It localises to the secreted. Functionally, the carboxylated form is one of the main organic components of the bone matrix, which constitutes 1-2% of the total bone protein. The carboxylated form binds strongly to apatite and calcium. This is Osteocalcin 2 from Diplodus sargus (White seabream).